The following is a 102-amino-acid chain: Small ribosomal subunit protein uS14 (102 aa).

Belongs to the universal ribosomal protein uS14 family. Part of the 30S ribosomal subunit. Contacts proteins S3 and S10.

Its function is as follows. Binds 16S rRNA, required for the assembly of 30S particles and may also be responsible for determining the conformation of the 16S rRNA at the A site. In Wolbachia pipientis wMel, this protein is Small ribosomal subunit protein uS14.